The primary structure comprises 1505 residues: Myosin-6 (1505 aa).

The 50-residue stretch at 8–57 folds into the Myosin N-terminal SH3-like domain; sequence SVGSFVWVEDPDEAWIDGEVVQVNGDEIKVLCTSGKHVVTKISNAYPKDV. The 670-residue stretch at 62–731 folds into the Myosin motor domain; that stretch reads SGVDDMTRLA…QMADLDTRRT (670 aa). Residues 156 to 163 and 209 to 217 contribute to the ATP site; these read GESGAGKT and NNNSSRFGK. Actin-binding stretches follow at residues 495 to 529, 531 to 554, 589 to 612, and 612 to 634; these read LIEKKPGGIIALLDEACMFPRSTHETFAQKLYQTF, THKRFTKPKLARSDFTICHYAGDV, FPPMSDDSKQSKFSSIGTRFKQQL, and LVSLLEILNTTEPHYIRCIKPNN. IQ domains lie at 734–763, 757–786, 782–811, 805–834, 830–859, and 853–882; these read LGRSASIIQRKVRSYLAKKSFIVLRNSAKQ, LRNSAKQIQSVCRGYLARSVYEGMRREAAA, REAAALKIQRDLRRFLARKAYTELYSAAVS, LYSAAVSVQAGMRGMVARKELCFRRQTKAA, QTKAAIIIQTWCRGYLARLHYRKLKKAAIT, and LKKAAITTQCAWRSKVARGELRKLKMAARE. Residues 883–1048 adopt a coiled-coil conformation; sequence TGALQAAKNK…AEKKIMHQQT (166 aa). One can recognise a Dilute domain in the interval 1148–1452; that stretch reads DRLIQMIGSA…ISSMRTLMTE (305 aa).

Belongs to the TRAFAC class myosin-kinesin ATPase superfamily. Myosin family. Plant myosin class XI subfamily. Homodimer. Interacts with RABC2A and RABD1. As to expression, expressed in flowers, leaves, roots and stems.

Its subcellular location is the cytoplasm. Functionally, myosin heavy chain that is required for the cell cycle-regulated transport of various organelles and proteins for their segregation. Functions by binding with its tail domain to receptor proteins on organelles and exerting force with its N-terminal motor domain against actin filaments, thereby transporting its cargo along polarized actin cables. Involved in the tip growth of root hair cells. Plays a major role in trafficking of Golgi stacks, mitochondria and peroxisomes during root hair development. Targets the peroxisome through an interaction with RABC2A. Required for development of pavement cells, trichomes, and stigmatic papillae. This is Myosin-6 (XI-2) from Arabidopsis thaliana (Mouse-ear cress).